The chain runs to 1639 residues: Peroxide stress-activated histidine kinase mak1 (1639 aa).

Residues 38–49 (SFTNSQNSSVGS) are compositionally biased toward polar residues. The interval 38–76 (SFTNSQNSSVGSVHSPILESPTSLNRQHRNSFSFNNVSS) is disordered. Low complexity predominate over residues 67 to 76 (NSFSFNNVSS). The 71-residue stretch at 716–786 (PFPLLKVIID…NDWKSSLFSG (71 aa)) folds into the PAS 1 domain. A PAC 1 domain is found at 789-841 (FYHEIRLQRFDNVYRYFICRAVPLRDCTGSVLHFFGTMTDVHDQKLAERELQK). Residues 848-920 (NENSYRSLAE…ESLEGTFNNQ (73 aa)) enclose the PAS 2 domain. The 54-residue stretch at 929 to 982 (FAAEIRFRSTDGHYRWHLVKSVCVNNSADTSTNLWLGTCTDIHDHKMLEEKLQE) folds into the PAC 2 domain. The Histidine kinase domain maps to 1000-1223 (NMSHEIRTPL…RFMWTATFTM (224 aa)). His1003 bears the Phosphohistidine; by autocatalysis mark. A Response regulatory domain is found at 1507–1629 (SVLLAEDNII…HLSLIISGIL (123 aa)). A 4-aspartylphosphate modification is found at Asp1559.

It localises to the cytoplasm. The enzyme catalyses ATP + protein L-histidine = ADP + protein N-phospho-L-histidine.. Functionally, involved in the control of the SAPK-dependent transcriptional response to peroxide stress. Also has a role in G2/M regulation. The chain is Peroxide stress-activated histidine kinase mak1 (mak1) from Schizosaccharomyces pombe (strain 972 / ATCC 24843) (Fission yeast).